The following is an 81-amino-acid chain: MYIHLGDDFVVSTRDIVGIFDFKANMSPIVEEFLKKQKHKVVPSVNGTPKSIVVTVQNIYYSPLSSSTLKKRAQFMFEIDS.

Regulates the biosynthesis of the extracellular matrix and the biofilm formation. May act as an enhancer of biofilm gene expression. Acts in parallel to the pathway that governs SinR derepression. The sequence is that of Extracellular matrix regulatory protein B from Bacillus subtilis (strain 168).